The following is a 2843-amino-acid chain: Adenomatous polyposis coli protein (2843 aa).

At alanine 2 the chain carries N-acetylalanine. Residues alanine 2–alanine 61 are a coiled coil. Residues serine 107 and serine 111 each carry the phosphoserine modification. Residues serine 127–asparagine 248 are a coiled coil. The tract at residues alanine 239–threonine 305 is disordered. A compositionally biased stretch (basic and acidic residues) spans glutamate 241–asparagine 261. A compositionally biased stretch (polar residues) spans methionine 271 to threonine 282. A compositionally biased stretch (low complexity) spans serine 290 to serine 299. ARM repeat units follow at residues leucine 453–isoleucine 495, leucine 505–valine 547, leucine 548–alanine 591, leucine 592–isoleucine 638, leucine 639–threonine 683, leucine 684–alanine 725, and leucine 726–glutamine 767. 3 positions are modified to phosphoserine: serine 744, serine 748, and serine 780. Residues threonine 828 to leucine 878 form a disordered region. Over residues serine 833–serine 843 the composition is skewed to low complexity. Residues serine 844–glycine 857 are compositionally biased toward basic and acidic residues. Over residues asparagine 869–leucine 878 the composition is skewed to polar residues. A Phosphoserine modification is found at serine 908. Disordered regions lie at residues arginine 923 to serine 943 and arginine 958 to serine 987. Residues alanine 927–serine 943 are compositionally biased toward polar residues. Positions serine 960–leucine 1337 are responsible for down-regulation through a process mediated by direct ubiquitination. Low complexity predominate over residues asparagine 961–aspartate 971. Phosphoserine is present on residues serine 987, serine 1038, and serine 1042. The tract at residues glutamate 1020 to glutamate 1169 is interaction with catenins. 3 disordered regions span residues valine 1099 to glutamate 1169, serine 1190 to glutamine 1244, and isoleucine 1311 to tyrosine 1376. Polar residues predominate over residues alanine 1107 to cysteine 1130. Over residues arginine 1146–proline 1159 the composition is skewed to basic and acidic residues. Low complexity predominate over residues serine 1190–asparagine 1224. The segment covering alanine 1225–glutamine 1244 has biased composition (polar residues). 2 stretches are compositionally biased toward low complexity: residues serine 1335 to glutamate 1345 and serine 1355 to alanine 1366. Residues serine 1360, serine 1371, serine 1385, serine 1392, and serine 1395 each carry the phosphoserine modification. Disordered stretches follow at residues serine 1403–alanine 1475, proline 1526–aspartate 1569, methionine 1583–glutamine 1611, serine 1664–lysine 1717, and asparagine 1729–glycine 1836. Position 1438 is a phosphothreonine (threonine 1438). Basic and acidic residues-rich tracts occupy residues threonine 1448–glycine 1466 and glutamate 1540–leucine 1564. Phosphoserine is present on serine 1567. Positions glutamate 1683 to aspartate 1698 are enriched in basic and acidic residues. Residues glycine 1735–lysine 1744 are compositionally biased toward basic residues. Position 1774 is a phosphoserine (serine 1774). Composition is skewed to basic and acidic residues over residues tyrosine 1785–aspartate 1794 and valine 1804–lysine 1813. Phosphoserine is present on residues serine 1861, serine 1863, and serine 1864. Residues aspartate 1866 to lysine 1893 are highly charged. The span at leucine 1881 to serine 1896 shows a compositional bias: basic and acidic residues. Disordered stretches follow at residues leucine 1881–lysine 1950, histidine 1965–serine 2011, and isoleucine 2043–leucine 2072. Composition is skewed to polar residues over residues histidine 1897–isoleucine 1913 and glutamine 1928–lysine 1938. Residues aspartate 1939–lysine 1950 show a composition bias toward basic and acidic residues. Serine 1971 and serine 1973 each carry phosphoserine. Over residues asparagine 1979–glutamate 1991 the composition is skewed to basic and acidic residues. The segment at glutamate 2035–aspartate 2059 is interaction with AXIN1. Residues serine 2088, serine 2093, serine 2125, serine 2129, serine 2130, and serine 2132 each carry the phosphoserine modification. Disordered stretches follow at residues proline 2147–threonine 2635 and asparagine 2667–arginine 2714. Residue threonine 2151 is modified to Phosphothreonine. Positions isoleucine 2167–serine 2674 are basic region. Over residues lysine 2169–glycine 2187 the composition is skewed to basic and acidic residues. 2 stretches are compositionally biased toward polar residues: residues valine 2203–serine 2223 and alanine 2257–proline 2271. Serine 2260, serine 2270, and serine 2283 each carry phosphoserine. Positions alanine 2286–proline 2331 are enriched in polar residues. Over residues threonine 2348–proline 2369 the composition is skewed to low complexity. Polar residues-rich tracts occupy residues glycine 2370–glycine 2409 and arginine 2418–serine 2427. A compositionally biased stretch (low complexity) spans serine 2459–serine 2477. Phosphoserine is present on residues serine 2473 and serine 2535. An interaction with DLG1 region spans residues threonine 2475–valine 2843. Positions asparagine 2518 to serine 2535 are enriched in basic and acidic residues. A compositionally biased stretch (polar residues) spans serine 2555–glycine 2568. Serine 2569 carries the post-translational modification Phosphoserine. Over residues serine 2569–glutamate 2579 the composition is skewed to low complexity. Basic and acidic residues predominate over residues serine 2580 to valine 2592. 3 stretches are compositionally biased toward polar residues: residues asparagine 2593–alanine 2608, phenylalanine 2620–threonine 2635, and asparagine 2668–threonine 2679. A phosphoserine mark is found at serine 2671 and serine 2674. Residues serine 2674–valine 2843 are interaction with MAPRE1. Threonine 2679 is subject to Phosphothreonine. Residues serine 2710 and serine 2724 each carry the phosphoserine modification. Positions aspartate 2729–valine 2843 are disordered. A compositionally biased stretch (polar residues) spans glycine 2741 to valine 2757. Residues serine 2763–serine 2774 are compositionally biased toward low complexity. Residues phenylalanine 2784 to asparagine 2812 show a composition bias toward polar residues. Serine 2789 is subject to Phosphoserine. The Microtubule tip localization signal motif lies at serine 2803–proline 2806. The short motif at threonine 2841 to valine 2843 is the PDZ-binding element.

This sequence belongs to the adenomatous polyposis coli (APC) family. Forms homooligomers. Found in a complex consisting of ARHGEF4, APC and CTNNB1. Found in a complex composed of MACF1, APC, AXIN1, CTNNB1 and GSK3B. The complex composed, at least, of APC, CTNNB1 and GSK3B interacts with JPT1; the interaction requires the inactive form of GSK3B (phosphorylated at 'Ser-9'). Interacts with APC2. Interacts with DLG1 (via PDZ domains) and DLG3 (via PDZ domains). Interacts with alpha- and beta-catenins. Interacts with AXIN1 (via RGS domain). Interacts with ARHGEF4 (via N-terminus). Interacts (via C-terminal residues 2674-2843) with MAPRE1 (via C-terminal residues 206-211); the interaction inhibits association with and bundling of F-actin. Interacts with MAPRE2 and MAPRE3 (via C-terminus). Interacts with DIAPH1; DIAPH1 acts as a scaffold protein for MAPRE1 and APC to stabilize microtubules and promote cell migration. Interacts with DIAPH2. Interacts with SCRIB; may mediate APC targeting to adherens junctions of epithelial cells. Interacts with SPATA13 (via N-terminus and SH3 domain). Interacts with ASAP1 (via SH3 domain). Interacts (at the cell membrane) with AMER1 and AMER2 (via ARM repeats). Interacts with KHDRBS1. Interacts with actin; binds both to F-actin and actin filament bundles. In terms of processing, phosphorylated; phosphorylation enhances the F-actin bundling activity. Phosphorylated by GSK3B. Post-translationally, ubiquitinated, leading to its degradation by the proteasome. Ubiquitination is facilitated by Axin. Deubiquitinated by ZRANB1/TRABID. As to expression, expressed in a variety of tissues: brain, small intestine, colon, thymus, skeletal muscle, heart, prostate, lung, spleen, ovary, testis kidney, placenta, blood and liver. Isoform 1A: Very strongly expressed in brain but has relatively low expression levels in other tissues. Isoform 1B: Predominant form in all tissues except for brain, including gastric mucosa and blood.

It localises to the cell junction. Its subcellular location is the adherens junction. It is found in the cytoplasm. The protein localises to the cytoskeleton. The protein resides in the cell projection. It localises to the lamellipodium. Its subcellular location is the ruffle membrane. It is found in the cell membrane. Its function is as follows. Tumor suppressor. Promotes rapid degradation of CTNNB1 and participates in Wnt signaling as a negative regulator. APC activity is correlated with its phosphorylation state. Activates the GEF activity of SPATA13 and ARHGEF4. Plays a role in hepatocyte growth factor (HGF)-induced cell migration. Required for MMP9 up-regulation via the JNK signaling pathway in colorectal tumor cells. Associates with both microtubules and actin filaments, components of the cytoskeleton. Plays a role in mediating the organization of F-actin into ordered bundles. Functions downstream of Rho GTPases and DIAPH1 to selectively stabilize microtubules. Acts as a mediator of ERBB2-dependent stabilization of microtubules at the cell cortex. It is required for the localization of MACF1 to the cell membrane and this localization of MACF1 is critical for its function in microtubule stabilization. This Homo sapiens (Human) protein is Adenomatous polyposis coli protein.